We begin with the raw amino-acid sequence, 153 residues long: Nitrogen regulatory protein (153 aa).

One can recognise a PTS EIIA type-2 domain in the interval 5-148 (DLVAPEAILP…QAIYSVLALP (144 aa)). Residue H66 is the Tele-phosphohistidine intermediate of the active site.

It is found in the cytoplasm. Functionally, seems to have a role in regulating nitrogen assimilation. In Bradyrhizobium diazoefficiens (strain JCM 10833 / BCRC 13528 / IAM 13628 / NBRC 14792 / USDA 110), this protein is Nitrogen regulatory protein (ptsN).